The primary structure comprises 159 residues: Phosphopantetheine adenylyltransferase (159 aa).

Ser9 serves as a coordination point for substrate. Residues 9–10 and His17 each bind ATP; that span reads SF. Substrate contacts are provided by Lys41, Leu73, and Lys87. ATP-binding positions include 88–90, Glu98, and 123–129; these read GLR and YGYLSSS.

This sequence belongs to the bacterial CoaD family. As to quaternary structure, homohexamer. Requires Mg(2+) as cofactor.

It localises to the cytoplasm. It catalyses the reaction (R)-4'-phosphopantetheine + ATP + H(+) = 3'-dephospho-CoA + diphosphate. It participates in cofactor biosynthesis; coenzyme A biosynthesis; CoA from (R)-pantothenate: step 4/5. Reversibly transfers an adenylyl group from ATP to 4'-phosphopantetheine, yielding dephospho-CoA (dPCoA) and pyrophosphate. The sequence is that of Phosphopantetheine adenylyltransferase from Thermoanaerobacter pseudethanolicus (strain ATCC 33223 / 39E) (Clostridium thermohydrosulfuricum).